A 577-amino-acid chain; its full sequence is 5'-nucleotidase (577 aa).

The signal sequence occupies residues 1 to 30 (MPRVPSASATGSSALLSLLCAFSLGRAAPF). Residues Asp-39, His-41, Asp-86, and Asn-118 each contribute to the Zn(2+) site. N-linked (GlcNAc...) asparagine glycosylation occurs at Asn-135. Positions 221 and 244 each coordinate Zn(2+). Position 246 (Asn-246) interacts with substrate. Asn-311 and Asn-347 each carry an N-linked (GlcNAc...) asparagine glycan. 2 disulfides stabilise this stretch: Cys-353/Cys-358 and Cys-365/Cys-387. Residue Arg-354 participates in substrate binding. Positions 390 and 395 each coordinate substrate. N-linked (GlcNAc...) asparagine glycosylation occurs at Asn-403. Phe-417 provides a ligand contact to substrate. A disulfide bond links Cys-476 and Cys-479. 500–506 (YIAEGGD) lines the substrate pocket. Ser-552 carries the GPI-anchor amidated serine lipid modification. Positions 553-577 (ATLPIINLKIGLSLFAFLTWFLHCS) are cleaved as a propeptide — removed in mature form.

The protein belongs to the 5'-nucleotidase family. As to quaternary structure, homodimer. It depends on Zn(2+) as a cofactor.

It is found in the cell membrane. It catalyses the reaction a ribonucleoside 5'-phosphate + H2O = a ribonucleoside + phosphate. In terms of biological role, hydrolyzes extracellular nucleotides into membrane permeable nucleosides. This chain is 5'-nucleotidase, found in Diplobatis ommata (Ocellated electric ray).